We begin with the raw amino-acid sequence, 486 residues long: Differentially expressed in FDCP 8 homolog (486 aa).

The tract at residues 1–26 is disordered; the sequence is MSSWCSSEDAHNQSSTPSTRSRKSSW. 2 Phorbol-ester/DAG-type zinc fingers span residues 160–212 and 393–459; these read GHEF…KRVC and IHTV…SLNC.

Belongs to the DEF8 family.

The protein is Differentially expressed in FDCP 8 homolog of Caenorhabditis elegans.